Here is a 238-residue protein sequence, read N- to C-terminus: Major prion protein (238 aa).

Positions 1 to 15 (MLVLFVATWSDLGLC) are cleaved as a signal peptide. Residues 16 to 215 (KKRPKPGGWN…ESQAYYQRGS (200 aa)) form an interaction with GRB2, ERI3 and SYN1 region. Positions 18–93 (RPKPGGWNTG…WHKPSKPKTS (76 aa)) are disordered. 4 tandem repeats follow at residues 44–52 (PQGGGGWGQ), 53–60 (PHGGGWGQ), 61–68 (PHGGGWGQ), and 69–76 (PHGGGWGQ). Residues 44–76 (PQGGGGWGQPHGGGWGQPHGGGWGQPHGGGWGQ) form a 4 X 8 AA tandem repeats of P-H-G-G-G-W-G-Q region. Over residues 45 to 80 (QGGGGWGQPHGGGWGQPHGGGWGQPHGGGWGQGGGT) the composition is skewed to gly residues. Positions 47, 48, 54, 55, 56, 62, 63, 64, 70, 71, and 72 each coordinate Cu(2+). The segment covering 83 to 93 (QWHKPSKPKTS) has biased composition (basic residues). The cysteines at positions 164 and 199 are disulfide-linked. N-linked (GlcNAc...) asparagine glycans are attached at residues Asn-166 and Asn-182. Ser-215 carries the GPI-anchor amidated serine lipid modification. A propeptide spans 216 to 238 (SMVLFSSPPVILLISFLIFLIVG) (removed in mature form).

Belongs to the prion family. Monomer and homodimer. Has a tendency to aggregate into amyloid fibrils containing a cross-beta spine, formed by a steric zipper of superposed beta-strands. Soluble oligomers may represent an intermediate stage on the path to fibril formation. Copper binding may promote oligomerization. Interacts with GRB2, APP, ERI3/PRNPIP and SYN1. Mislocalized cytosolically exposed PrP interacts with MGRN1; this interaction alters MGRN1 subcellular location and causes lysosomal enlargement. Interacts with KIAA1191.

The protein resides in the cell membrane. The protein localises to the golgi apparatus. Its function is as follows. Its primary physiological function is unclear. Has cytoprotective activity against internal or environmental stresses. May play a role in neuronal development and synaptic plasticity. May be required for neuronal myelin sheath maintenance. May play a role in iron uptake and iron homeostasis. Soluble oligomers are toxic to cultured neuroblastoma cells and induce apoptosis (in vitro). Association with GPC1 (via its heparan sulfate chains) targets PRNP to lipid rafts. Also provides Cu(2+) or Zn(2+) for the ascorbate-mediated GPC1 deaminase degradation of its heparan sulfate side chains. In Macaca sylvanus (Barbary macaque), this protein is Major prion protein (PRNP).